We begin with the raw amino-acid sequence, 170 residues long: Phosphopantetheine adenylyltransferase (170 aa).

Residue Ser14 coordinates substrate. ATP is bound by residues 14–15 (SF) and His22. Substrate is bound by residues Lys46, Leu79, and Arg93. Residues 94–96 (GIR), Glu104, and 129–135 (IAEVSST) each bind ATP.

The protein belongs to the bacterial CoaD family. Homohexamer. The cofactor is Mg(2+).

The protein localises to the cytoplasm. The enzyme catalyses (R)-4'-phosphopantetheine + ATP + H(+) = 3'-dephospho-CoA + diphosphate. The protein operates within cofactor biosynthesis; coenzyme A biosynthesis; CoA from (R)-pantothenate: step 4/5. Reversibly transfers an adenylyl group from ATP to 4'-phosphopantetheine, yielding dephospho-CoA (dPCoA) and pyrophosphate. The sequence is that of Phosphopantetheine adenylyltransferase from Neisseria meningitidis serogroup C (strain 053442).